The chain runs to 417 residues: Serine hydroxymethyltransferase (417 aa).

Residues Leu-121 and 125-127 contribute to the (6S)-5,6,7,8-tetrahydrofolate site; that span reads GHL. At Lys-230 the chain carries N6-(pyridoxal phosphate)lysine. 355 to 357 serves as a coordination point for (6S)-5,6,7,8-tetrahydrofolate; it reads SPF.

It belongs to the SHMT family. In terms of assembly, homodimer. The cofactor is pyridoxal 5'-phosphate.

It is found in the cytoplasm. It catalyses the reaction (6R)-5,10-methylene-5,6,7,8-tetrahydrofolate + glycine + H2O = (6S)-5,6,7,8-tetrahydrofolate + L-serine. Its pathway is one-carbon metabolism; tetrahydrofolate interconversion. It participates in amino-acid biosynthesis; glycine biosynthesis; glycine from L-serine: step 1/1. In terms of biological role, catalyzes the reversible interconversion of serine and glycine with tetrahydrofolate (THF) serving as the one-carbon carrier. This reaction serves as the major source of one-carbon groups required for the biosynthesis of purines, thymidylate, methionine, and other important biomolecules. Also exhibits THF-independent aldolase activity toward beta-hydroxyamino acids, producing glycine and aldehydes, via a retro-aldol mechanism. The polypeptide is Serine hydroxymethyltransferase (Legionella pneumophila (strain Corby)).